The primary structure comprises 877 residues: MAAERYNPRVAEAHWQKVWEENRTFETDNSDSREKYYVLEMFPYPSGRIHMGHVRNYAMGDVVARYKRAKGFNVLHPMGWDAFGMPAENAAMQNKVHPKEWTYQNIATMKRQLKSMGLSLDWSREFATCDVEYYHRQQMLFIDLYEKGLVTRKTSKVNWDPVDNTVLANEQVVDGRGWRSGALVEQRELTQWFFKITDFSEELLAGLDTLDQWPEKVRLMQRNWIGKSEGLQVRLALAAGTAPAGFSEVEVYTTRPDTLFGAAFVAISADHPLAKKLSEGNAALSSFIEECHQQGTSLAALETAEKKGFDTGIKVKHPFDDNWELPVYVANFVLMEYGTGAVFGCPAHDQRDLDFANKYKLKVTPVVLPKGEDAASFSIGETAYTDDGVMINSRFLDGMTPAAAFNEVASRLEKTDLVGRPQAVRKVQFRLRDWGISRQRYWGCPIPMIHCESCGVNPVPRADLPVKLPDDVEFDRPGNPLDRHATWRHVKCPKCGGDARRETDTMDTFVDSSWYYTRFTAPWENEPTDRKAADHWLPVDQYIGGIEHAILHLLYSRFFTRAMKVAGHVGVDEPFKGLFTQGMVVHETYKANGQWVSPADIRIEEIDGKRVATMLDSGAPVEIGSIEKMSKSKKNVVDPDDIIASYGADIARWFVLSDSPPERDVIWTEAGAEGAHRFVQRIWRLVAEAAPALKDVAPKAGTQGEALGVSKAAHKAVKAVGDDIEKLAFNRGVARLYELVNTLSGALQQAADGKADAEMKGALREATEMLVLMTAPMMPHLAEQCLAELGGKVAGKETLVARAPWPVFDPALVVENEIVLPVQINGKKRGDLTIARDADQASIQQAVLELDFVKAALNGGSPKKIIVVPQRIVNVVA.

The short motif at proline 43 to histidine 53 is the 'HIGH' region element. The 'KMSKS' region motif lies at lysine 628–serine 632. Lysine 631 lines the ATP pocket.

It belongs to the class-I aminoacyl-tRNA synthetase family.

It localises to the cytoplasm. It catalyses the reaction tRNA(Leu) + L-leucine + ATP = L-leucyl-tRNA(Leu) + AMP + diphosphate. The chain is Leucine--tRNA ligase from Brucella canis (strain ATCC 23365 / NCTC 10854 / RM-666).